Here is a 284-residue protein sequence, read N- to C-terminus: Diaminopimelate epimerase (284 aa).

Positions 13 and 66 each coordinate substrate. C75 (proton donor) is an active-site residue. Substrate contacts are provided by residues 76 to 77, N166, N199, and 217 to 218; these read GN and ER. C226 (proton acceptor) is an active-site residue. 227-228 contributes to the substrate binding site; that stretch reads GT.

It belongs to the diaminopimelate epimerase family. In terms of assembly, homodimer.

Its subcellular location is the cytoplasm. It catalyses the reaction (2S,6S)-2,6-diaminopimelate = meso-2,6-diaminopimelate. It participates in amino-acid biosynthesis; L-lysine biosynthesis via DAP pathway; DL-2,6-diaminopimelate from LL-2,6-diaminopimelate: step 1/1. Its function is as follows. Catalyzes the stereoinversion of LL-2,6-diaminopimelate (L,L-DAP) to meso-diaminopimelate (meso-DAP), a precursor of L-lysine and an essential component of the bacterial peptidoglycan. This Halothermothrix orenii (strain H 168 / OCM 544 / DSM 9562) protein is Diaminopimelate epimerase.